The chain runs to 607 residues: Pescadillo homolog (607 aa).

The BRCT domain occupies lysine 320 to isoleucine 413. Residues glutamate 486–lysine 607 form a disordered region. Positions glutamate 495–glutamate 511 are enriched in acidic residues. The segment covering isoleucine 530–arginine 549 has biased composition (basic and acidic residues). Residues arginine 551–arginine 562 show a composition bias toward basic residues. The segment covering lysine 563–lysine 607 has biased composition (basic and acidic residues).

The protein belongs to the pescadillo family.

The protein resides in the nucleus. Its subcellular location is the nucleolus. It is found in the nucleoplasm. Required for maturation of ribosomal RNAs and formation of the large ribosomal subunit. The protein is Pescadillo homolog of Culex quinquefasciatus (Southern house mosquito).